Reading from the N-terminus, the 236-residue chain is Purine nucleoside phosphorylase DeoD-type 2 (236 aa).

Position 5 (His5) interacts with a purine D-ribonucleoside. Phosphate-binding positions include Gly21, Arg25, Arg44, and 88–91 (RIGS). A purine D-ribonucleoside contacts are provided by residues 180 to 182 (DME) and 204 to 205 (SD). Residue Asp205 is the Proton donor of the active site.

Belongs to the PNP/UDP phosphorylase family. Homohexamer; trimer of homodimers.

The catalysed reaction is a purine D-ribonucleoside + phosphate = a purine nucleobase + alpha-D-ribose 1-phosphate. It carries out the reaction a purine 2'-deoxy-D-ribonucleoside + phosphate = a purine nucleobase + 2-deoxy-alpha-D-ribose 1-phosphate. Its function is as follows. Catalyzes the reversible phosphorolytic breakdown of the N-glycosidic bond in the beta-(deoxy)ribonucleoside molecules, with the formation of the corresponding free purine bases and pentose-1-phosphate. The chain is Purine nucleoside phosphorylase DeoD-type 2 from Vibrio cholerae serotype O1 (strain ATCC 39315 / El Tor Inaba N16961).